Consider the following 87-residue polypeptide: Cell division topological specificity factor (87 aa).

The protein belongs to the MinE family.

Functionally, prevents the cell division inhibition by proteins MinC and MinD at internal division sites while permitting inhibition at polar sites. This ensures cell division at the proper site by restricting the formation of a division septum at the midpoint of the long axis of the cell. This chain is Cell division topological specificity factor, found in Aliivibrio fischeri (strain ATCC 700601 / ES114) (Vibrio fischeri).